The sequence spans 274 residues: Large ribosomal subunit protein uL2cz/uL2cy (274 aa).

2 disordered regions span residues 1-21 and 225-274; these read MAIHLYKTSTPSTRNGAVDSQ and PVDH…RRSK.

This sequence belongs to the universal ribosomal protein uL2 family. As to quaternary structure, part of the 50S ribosomal subunit.

It localises to the plastid. The protein localises to the chloroplast. The polypeptide is Large ribosomal subunit protein uL2cz/uL2cy (rpl2-A) (Arabidopsis thaliana (Mouse-ear cress)).